Reading from the N-terminus, the 252-residue chain is Large ribosomal subunit protein uL4 (252 aa).

The protein belongs to the universal ribosomal protein uL4 family. Part of the 50S ribosomal subunit.

Functionally, one of the primary rRNA binding proteins, this protein initially binds near the 5'-end of the 23S rRNA. It is important during the early stages of 50S assembly. It makes multiple contacts with different domains of the 23S rRNA in the assembled 50S subunit and ribosome. Its function is as follows. Forms part of the polypeptide exit tunnel. In Methanococcus maripaludis (strain C6 / ATCC BAA-1332), this protein is Large ribosomal subunit protein uL4.